The chain runs to 852 residues: Beta-galactosidase 8 (852 aa).

Residues 1–29 form the signal peptide; that stretch reads MEIAAKMVKVRKMEMILLLILVIVVAATA. The N-linked (GlcNAc...) asparagine glycan is linked to asparagine 31. The Proton donor role is filled by glutamate 188. Residue glutamate 257 is the Nucleophile of the active site. N-linked (GlcNAc...) asparagine glycans are attached at residues asparagine 258, asparagine 475, asparagine 766, and asparagine 807. Residues 766–852 form the SUEL-type lectin domain; the sequence is NRTRPVLSLK…KSLAVEASCS (87 aa).

It belongs to the glycosyl hydrolase 35 family. As to expression, expressed in roots, flowers and siliques.

It localises to the secreted. It is found in the extracellular space. The protein localises to the apoplast. It carries out the reaction Hydrolysis of terminal non-reducing beta-D-galactose residues in beta-D-galactosides.. In Arabidopsis thaliana (Mouse-ear cress), this protein is Beta-galactosidase 8 (BGAL8).